Consider the following 107-residue polypeptide: Integration host factor subunit beta (107 aa).

The disordered stretch occupies residues 78-107; that stretch reads PHFKPGKELRERVDGRAGEPLKADEPDDER. The span at 82–101 shows a compositional bias: basic and acidic residues; it reads PGKELRERVDGRAGEPLKAD.

It belongs to the bacterial histone-like protein family. Heterodimer of an alpha and a beta chain.

Its function is as follows. This protein is one of the two subunits of integration host factor, a specific DNA-binding protein that functions in genetic recombination as well as in transcriptional and translational control. The polypeptide is Integration host factor subunit beta (Burkholderia multivorans (strain ATCC 17616 / 249)).